Reading from the N-terminus, the 122-residue chain is Large ribosomal subunit protein uL14 (122 aa).

This sequence belongs to the universal ribosomal protein uL14 family. Part of the 50S ribosomal subunit. Forms a cluster with proteins L3 and L19. In the 70S ribosome, L14 and L19 interact and together make contacts with the 16S rRNA in bridges B5 and B8.

Functionally, binds to 23S rRNA. Forms part of two intersubunit bridges in the 70S ribosome. In Baumannia cicadellinicola subsp. Homalodisca coagulata, this protein is Large ribosomal subunit protein uL14.